The primary structure comprises 274 residues: Diaminopimelate epimerase (274 aa).

Positions 11, 44, and 64 each coordinate substrate. Residue C73 is the Proton donor of the active site. Residues 74–75 (GN), N157, N190, and 208–209 (ER) each bind substrate. The Proton acceptor role is filled by C217. 218–219 (GS) is a binding site for substrate.

This sequence belongs to the diaminopimelate epimerase family. In terms of assembly, homodimer.

It is found in the cytoplasm. It catalyses the reaction (2S,6S)-2,6-diaminopimelate = meso-2,6-diaminopimelate. Its pathway is amino-acid biosynthesis; L-lysine biosynthesis via DAP pathway; DL-2,6-diaminopimelate from LL-2,6-diaminopimelate: step 1/1. In terms of biological role, catalyzes the stereoinversion of LL-2,6-diaminopimelate (L,L-DAP) to meso-diaminopimelate (meso-DAP), a precursor of L-lysine and an essential component of the bacterial peptidoglycan. The chain is Diaminopimelate epimerase from Proteus mirabilis (strain HI4320).